Here is a 399-residue protein sequence, read N- to C-terminus: UDP-N-acetylglucosamine--N-acetylmuramyl-(pentapeptide) pyrophosphoryl-undecaprenol N-acetylglucosamine transferase (399 aa).

UDP-N-acetyl-alpha-D-glucosamine contacts are provided by residues Thr29–Gly31, Asn148, Arg185, Ser219, and Gln318.

Belongs to the glycosyltransferase 28 family. MurG subfamily.

Its subcellular location is the cell membrane. The catalysed reaction is di-trans,octa-cis-undecaprenyl diphospho-N-acetyl-alpha-D-muramoyl-L-alanyl-D-glutamyl-meso-2,6-diaminopimeloyl-D-alanyl-D-alanine + UDP-N-acetyl-alpha-D-glucosamine = di-trans,octa-cis-undecaprenyl diphospho-[N-acetyl-alpha-D-glucosaminyl-(1-&gt;4)]-N-acetyl-alpha-D-muramoyl-L-alanyl-D-glutamyl-meso-2,6-diaminopimeloyl-D-alanyl-D-alanine + UDP + H(+). It functions in the pathway cell wall biogenesis; peptidoglycan biosynthesis. Its function is as follows. Cell wall formation. Catalyzes the transfer of a GlcNAc subunit on undecaprenyl-pyrophosphoryl-MurNAc-pentapeptide (lipid intermediate I) to form undecaprenyl-pyrophosphoryl-MurNAc-(pentapeptide)GlcNAc (lipid intermediate II). The protein is UDP-N-acetylglucosamine--N-acetylmuramyl-(pentapeptide) pyrophosphoryl-undecaprenol N-acetylglucosamine transferase of Mycobacterium ulcerans (strain Agy99).